The sequence spans 586 residues: Probable zinc metalloprotease EGY3, chloroplastic (586 aa).

The N-terminal 54 residues, 1 to 54 (MSSSSLVTSLLFSSSSSSNTATSTSSRRSFSLFSKNQYCKPSPLRRSSSLLLVR), are a transit peptide targeting the chloroplast. Basic and acidic residues predominate over residues 62 to 73 (EEKAAPAAESHH). The tract at residues 62-118 (EEKAAPAAESHHAGGGQDDAATASHHAVEGENGVADADGGGVKKSKEELEEEEQQEV) is disordered. Residues 103–195 (VKKSKEELEE…NTFKALDLNK (93 aa)) are a coiled coil. Transmembrane regions (helical) follow at residues 287 to 307 (LSAV…SGFF), 318 to 338 (VSDV…SEIA), 389 to 409 (ASAY…DGSL), 427 to 447 (PLLS…GNVL), 454 to 474 (VGVP…VTSL), 506 to 526 (VALG…WGLF), and 550 to 570 (YAWG…NGGG).

It belongs to the peptidase M50B family.

It is found in the plastid. The protein resides in the chloroplast membrane. Functionally, probable membrane-associated metalloprotease that may be involved in chloroplast development. This is Probable zinc metalloprotease EGY3, chloroplastic (EGY3) from Oryza sativa subsp. indica (Rice).